The sequence spans 203 residues: Peptidyl-tRNA hydrolase (203 aa).

Residue tyrosine 14 coordinates tRNA. The active-site Proton acceptor is the histidine 19. Tyrosine 64, asparagine 66, and asparagine 112 together coordinate tRNA.

The protein belongs to the PTH family. In terms of assembly, monomer.

The protein localises to the cytoplasm. The enzyme catalyses an N-acyl-L-alpha-aminoacyl-tRNA + H2O = an N-acyl-L-amino acid + a tRNA + H(+). In terms of biological role, hydrolyzes ribosome-free peptidyl-tRNAs (with 1 or more amino acids incorporated), which drop off the ribosome during protein synthesis, or as a result of ribosome stalling. Catalyzes the release of premature peptidyl moieties from peptidyl-tRNA molecules trapped in stalled 50S ribosomal subunits, and thus maintains levels of free tRNAs and 50S ribosomes. The protein is Peptidyl-tRNA hydrolase of Methylobacterium nodulans (strain LMG 21967 / CNCM I-2342 / ORS 2060).